The following is a 1265-amino-acid chain: Protein FAM193A (1265 aa).

Positions 107 to 142 (SEDTYSTLLQRYQRSEEELRRVAEEWLECQKRIDAY) form a coiled coil. A disordered region spans residues 247 to 272 (APDYLAERSPPSVSSASSGSGSSSPI). The segment covering 255–271 (SPPSVSSASSGSGSSSP) has biased composition (low complexity). S293 is subject to Phosphoserine. Disordered stretches follow at residues 331–407 (NGGG…EQAP), 553–586 (GSEI…SKEK), 626–674 (VQSS…APLP), 750–785 (ENGV…NQKE), 822–841 (LTKR…ERES), 859–881 (ETKP…KLEE), and 893–1163 (EHLH…DRVN). The segment covering 355–365 (EADDEEADGES) has biased composition (acidic residues). Residue S383 is modified to Phosphoserine. Position 642 is a phosphoserine (S642). Residues 757 to 769 (QQDDGDESADEDS) are compositionally biased toward acidic residues. Residues 772-781 (EHSSSTSTST) show a composition bias toward low complexity. Residues 868-877 (AAKRARHKQR) are compositionally biased toward basic residues. Positions 873–932 (RHKQRKLEEKARLEAEARAREHLHLQEEQRRREEEEDEEEEEDRFKEEFQRLQELQKLRA) form a coiled coil. Basic and acidic residues-rich tracts occupy residues 893-905 (EHLH…RRRE) and 915-929 (DRFK…ELQK). Positions 931–940 (RAVKKKKKER) are enriched in basic residues. Polar residues predominate over residues 953-973 (RNFQAATESVPNSGNIHNGSL). Residues 1093–1118 (TEQKREERKVNSNNNNKKQLNHIKDE) are a coiled coil. Residues S1129 and S1144 each carry the phosphoserine modification. Positions 1149 to 1159 (GKNKKNKKKKG) are enriched in basic residues.

It belongs to the FAM193 family.

In Homo sapiens (Human), this protein is Protein FAM193A (FAM193A).